Here is a 142-residue protein sequence, read N- to C-terminus: Large ribosomal subunit protein uL13 (142 aa).

Belongs to the universal ribosomal protein uL13 family. In terms of assembly, part of the 50S ribosomal subunit.

This protein is one of the early assembly proteins of the 50S ribosomal subunit, although it is not seen to bind rRNA by itself. It is important during the early stages of 50S assembly. The chain is Large ribosomal subunit protein uL13 from Shewanella amazonensis (strain ATCC BAA-1098 / SB2B).